The sequence spans 504 residues: Apolipoprotein N-acyltransferase (504 aa).

Transmembrane regions (helical) follow at residues Leu6–Val26, Ala47–Val67, Leu83–Val103, Ala105–Thr125, Ile153–Leu173, and Phe186–Trp206. The CN hydrolase domain occupies Leu219 to Pro457. The Proton acceptor role is filled by Glu258. Lys317 is an active-site residue. The active-site Nucleophile is the Cys369. Residues Ala465–Ala485 form a helical membrane-spanning segment.

The protein belongs to the CN hydrolase family. Apolipoprotein N-acyltransferase subfamily.

It is found in the cell inner membrane. It carries out the reaction N-terminal S-1,2-diacyl-sn-glyceryl-L-cysteinyl-[lipoprotein] + a glycerophospholipid = N-acyl-S-1,2-diacyl-sn-glyceryl-L-cysteinyl-[lipoprotein] + a 2-acyl-sn-glycero-3-phospholipid + H(+). It participates in protein modification; lipoprotein biosynthesis (N-acyl transfer). In terms of biological role, catalyzes the phospholipid dependent N-acylation of the N-terminal cysteine of apolipoprotein, the last step in lipoprotein maturation. This is Apolipoprotein N-acyltransferase from Methylococcus capsulatus (strain ATCC 33009 / NCIMB 11132 / Bath).